The sequence spans 444 residues: Exodeoxyribonuclease 7 large subunit (444 aa).

The protein belongs to the XseA family. Heterooligomer composed of large and small subunits.

Its subcellular location is the cytoplasm. The catalysed reaction is Exonucleolytic cleavage in either 5'- to 3'- or 3'- to 5'-direction to yield nucleoside 5'-phosphates.. In terms of biological role, bidirectionally degrades single-stranded DNA into large acid-insoluble oligonucleotides, which are then degraded further into small acid-soluble oligonucleotides. This Hahella chejuensis (strain KCTC 2396) protein is Exodeoxyribonuclease 7 large subunit.